The chain runs to 72 residues: Translation initiation factor IF-1 (72 aa).

The region spanning 1-72 (MAKEEAIEVE…TRGRITYREK (72 aa)) is the S1-like domain.

It belongs to the IF-1 family. Component of the 30S ribosomal translation pre-initiation complex which assembles on the 30S ribosome in the order IF-2 and IF-3, IF-1 and N-formylmethionyl-tRNA(fMet); mRNA recruitment can occur at any time during PIC assembly.

Its subcellular location is the cytoplasm. Functionally, one of the essential components for the initiation of protein synthesis. Stabilizes the binding of IF-2 and IF-3 on the 30S subunit to which N-formylmethionyl-tRNA(fMet) subsequently binds. Helps modulate mRNA selection, yielding the 30S pre-initiation complex (PIC). Upon addition of the 50S ribosomal subunit IF-1, IF-2 and IF-3 are released leaving the mature 70S translation initiation complex. The chain is Translation initiation factor IF-1 from Syntrophotalea carbinolica (strain DSM 2380 / NBRC 103641 / GraBd1) (Pelobacter carbinolicus).